A 261-amino-acid chain; its full sequence is Glutamate racemase (261 aa).

Substrate is bound by residues 7 to 8 (DS) and 39 to 40 (YG). C71 acts as the Proton donor/acceptor in catalysis. Position 72–73 (72–73 (NT)) interacts with substrate. The active-site Proton donor/acceptor is C184. 185 to 186 (TH) provides a ligand contact to substrate.

It belongs to the aspartate/glutamate racemases family.

The catalysed reaction is L-glutamate = D-glutamate. It participates in cell wall biogenesis; peptidoglycan biosynthesis. Its function is as follows. Provides the (R)-glutamate required for cell wall biosynthesis. The polypeptide is Glutamate racemase (Aliarcobacter butzleri (strain RM4018) (Arcobacter butzleri)).